The sequence spans 283 residues: Phosphate import ATP-binding protein PstB 2 (283 aa).

An ABC transporter domain is found at 36–278 (LQVKQFNFYY…PKKKQTEDYI (243 aa)). 69–76 (GPSGCGKS) contacts ATP.

This sequence belongs to the ABC transporter superfamily. Phosphate importer (TC 3.A.1.7) family. The complex is composed of two ATP-binding proteins (PstB), two transmembrane proteins (PstC and PstA) and a solute-binding protein (PstS).

It is found in the cell inner membrane. The enzyme catalyses phosphate(out) + ATP + H2O = ADP + 2 phosphate(in) + H(+). Functionally, part of the ABC transporter complex PstSACB involved in phosphate import. Responsible for energy coupling to the transport system. This is Phosphate import ATP-binding protein PstB 2 from Nitrosococcus oceani (strain ATCC 19707 / BCRC 17464 / JCM 30415 / NCIMB 11848 / C-107).